The sequence spans 420 residues: O-methyltransferase opaF (420 aa).

Residues 262–263 (GG), Asp287, and 308–309 (DL) each bind S-adenosyl-L-methionine. The active-site Proton acceptor is His328.

This sequence belongs to the class I-like SAM-binding methyltransferase superfamily. Cation-independent O-methyltransferase family.

It functions in the pathway secondary metabolite biosynthesis. In terms of biological role, O-methyltransferase; part of the gene cluster that mediates the biosynthesis of oxepinamides, derivatives of anthranilyl-containing tripeptides that share an oxepin ring and a fused pyrimidinone moiety. The nonribosomal peptide synthetase (NRPS) opaA assembles the quinazolinone core with D-Phe incorporation. The first adenylation domain (A1) of opaA loads and activates anthranilic acid whereas the second A domain (A2) is for activating of L-Phe, which is then converted to D-form by the E domain. The third A domain (A3) is responsible for L-Ile activation and the terminal condensation domain C3 for cyclization and releasing the NRPS product protuboxepin K. The cytochrome P450 monooxygenase opaB then catalyzes alone the oxepin ring formation to convert protuboxepin K into protuboxepin A. The flavoenzyme opaC installs subsequently one hydroxyl group at the oxepin ring, accompanied by double bond migration, to form 15-epi-oxepinamide E. The epimerase opaE changes the D-Phe residue back to L-form, leading to oxepinamide E, which is further methylated at the hydroxyl group at C-12 by the O-methyltransferase OpaF to yield oxepinamide F. The sequence is that of O-methyltransferase opaF from Aspergillus ustus.